A 192-amino-acid chain; its full sequence is Probable nicotinate-nucleotide adenylyltransferase (192 aa).

Belongs to the NadD family.

It carries out the reaction nicotinate beta-D-ribonucleotide + ATP + H(+) = deamido-NAD(+) + diphosphate. It participates in cofactor biosynthesis; NAD(+) biosynthesis; deamido-NAD(+) from nicotinate D-ribonucleotide: step 1/1. In terms of biological role, catalyzes the reversible adenylation of nicotinate mononucleotide (NaMN) to nicotinic acid adenine dinucleotide (NaAD). This Staphylococcus haemolyticus (strain JCSC1435) protein is Probable nicotinate-nucleotide adenylyltransferase.